Reading from the N-terminus, the 789-residue chain is Ent-kaurene synthase TSP4, chloroplastic (789 aa).

2 residues coordinate Mg(2+): aspartate 540 and aspartate 544. The DDXXD motif signature appears at 540–544 (DDFFD). Residues 638–656 (AYVSFALGPIVLPALYLVG) traverse the membrane as a helical segment. Positions 684, 687, and 692 each coordinate Mg(2+).

It belongs to the terpene synthase family. Mg(2+) serves as cofactor. As to expression, expressed in leaves and fruits, including trichomes.

The protein localises to the plastid. It is found in the chloroplast membrane. The enzyme catalyses ent-copalyl diphosphate = ent-kaur-16-ene + diphosphate. Its pathway is plant hormone biosynthesis; gibberellin biosynthesis. In terms of biological role, involved in the biosynthesis of labdane-type diterpenoid including cleroda-dienols, and peregrinol lactones and furan derivatives, dopaminergic diterpenoids that can bind to dopamine receptors in the human pituitary gland, have probably ability to lower prolactin levels, and are used to treat menstrual cycle disorders (e.g. premenstrual syndrome and mastodynia). Terpene synthase that produces ent-kaurene from ent-copalyl diphosphate. The sequence is that of Ent-kaurene synthase TSP4, chloroplastic from Vitex agnus-castus (Chaste tree).